We begin with the raw amino-acid sequence, 272 residues long: Regulatory protein RecX (272 aa).

This sequence belongs to the RecX family.

The protein resides in the cytoplasm. In terms of biological role, modulates RecA activity. This Staphylococcus aureus (strain Newman) protein is Regulatory protein RecX.